The primary structure comprises 351 residues: Chorismate synthase (351 aa).

The tract at residues 39–60 (EDIQRDLERRRPGKRLTSPRGE) is disordered. The NADP(+) site is built by Arg-48 and Arg-53. FMN contacts are provided by residues 124-126 (RSS), Ala-276, 291-295 (KPIPS), and Arg-317.

This sequence belongs to the chorismate synthase family. As to quaternary structure, homotetramer. It depends on FMNH2 as a cofactor.

It catalyses the reaction 5-O-(1-carboxyvinyl)-3-phosphoshikimate = chorismate + phosphate. It functions in the pathway metabolic intermediate biosynthesis; chorismate biosynthesis; chorismate from D-erythrose 4-phosphate and phosphoenolpyruvate: step 7/7. Catalyzes the anti-1,4-elimination of the C-3 phosphate and the C-6 proR hydrogen from 5-enolpyruvylshikimate-3-phosphate (EPSP) to yield chorismate, which is the branch point compound that serves as the starting substrate for the three terminal pathways of aromatic amino acid biosynthesis. This reaction introduces a second double bond into the aromatic ring system. This is Chorismate synthase from Syntrophobacter fumaroxidans (strain DSM 10017 / MPOB).